A 191-amino-acid chain; its full sequence is Photosystem I assembly protein Ycf4 (191 aa).

2 helical membrane-spanning segments follow: residues 33-53 and 74-94; these read LLAV…LSSY and LVMG…WAMI.

The protein belongs to the Ycf4 family.

Its subcellular location is the cellular thylakoid membrane. Seems to be required for the assembly of the photosystem I complex. This is Photosystem I assembly protein Ycf4 from Prochlorococcus marinus (strain MIT 9303).